The chain runs to 142 residues: Small ribosomal subunit protein uS19 (142 aa).

S2 carries the post-translational modification N-acetylserine. Residues K24, K35, and K64 each participate in a glycyl lysine isopeptide (Lys-Gly) (interchain with G-Cter in ubiquitin) cross-link.

The protein belongs to the universal ribosomal protein uS19 family. In terms of assembly, component of the small ribosomal subunit (SSU). Mature yeast ribosomes consist of a small (40S) and a large (60S) subunit. The 40S small subunit contains 1 molecule of ribosomal RNA (18S rRNA) and 33 different proteins (encoded by 57 genes). The large 60S subunit contains 3 rRNA molecules (25S, 5.8S and 5S rRNA) and 46 different proteins (encoded by 81 genes).

It is found in the cytoplasm. Component of the ribosome, a large ribonucleoprotein complex responsible for the synthesis of proteins in the cell. The small ribosomal subunit (SSU) binds messenger RNAs (mRNAs) and translates the encoded message by selecting cognate aminoacyl-transfer RNA (tRNA) molecules. The large subunit (LSU) contains the ribosomal catalytic site termed the peptidyl transferase center (PTC), which catalyzes the formation of peptide bonds, thereby polymerizing the amino acids delivered by tRNAs into a polypeptide chain. The nascent polypeptides leave the ribosome through a tunnel in the LSU and interact with protein factors that function in enzymatic processing, targeting, and the membrane insertion of nascent chains at the exit of the ribosomal tunnel. uS19 is involved in the nuclear export of the small ribosomal subunit precursor. Has a role in the late stage of the assembly of pre-40S particles within the nucleus and controls their export to the cytoplasm. The chain is Small ribosomal subunit protein uS19 from Saccharomyces cerevisiae (strain ATCC 204508 / S288c) (Baker's yeast).